Reading from the N-terminus, the 556-residue chain is Hydroxylamine reductase (556 aa).

4 residues coordinate [4Fe-4S] cluster: C4, C7, C19, and C26. Residues H252, E276, C320, C407, C435, C460, E494, and K496 each contribute to the hybrid [4Fe-2O-2S] cluster site. At C407 the chain carries Cysteine persulfide.

It belongs to the HCP family. It depends on [4Fe-4S] cluster as a cofactor. Hybrid [4Fe-2O-2S] cluster serves as cofactor.

It is found in the cytoplasm. The enzyme catalyses A + NH4(+) + H2O = hydroxylamine + AH2 + H(+). Functionally, catalyzes the reduction of hydroxylamine to form NH(3) and H(2)O. The polypeptide is Hydroxylamine reductase (Acidithiobacillus ferridurans).